The following is a 395-amino-acid chain: S-adenosylmethionine synthase (395 aa).

His16 serves as a coordination point for ATP. Residue Asp18 coordinates Mg(2+). Position 44 (Glu44) interacts with K(+). 2 residues coordinate L-methionine: Glu57 and Gln100. Residues 100–110 (QSPDIAQGVDR) form a flexible loop region. ATP-binding positions include 167–169 (DAK), 233–234 (RF), Asp242, 248–249 (RK), Ala265, and Lys269. Asp242 is a binding site for L-methionine. Lys273 is an L-methionine binding site.

It belongs to the AdoMet synthase family. Homotetramer; dimer of dimers. Mg(2+) is required as a cofactor. It depends on K(+) as a cofactor.

The protein resides in the cytoplasm. The enzyme catalyses L-methionine + ATP + H2O = S-adenosyl-L-methionine + phosphate + diphosphate. It functions in the pathway amino-acid biosynthesis; S-adenosyl-L-methionine biosynthesis; S-adenosyl-L-methionine from L-methionine: step 1/1. In terms of biological role, catalyzes the formation of S-adenosylmethionine (AdoMet) from methionine and ATP. The overall synthetic reaction is composed of two sequential steps, AdoMet formation and the subsequent tripolyphosphate hydrolysis which occurs prior to release of AdoMet from the enzyme. The sequence is that of S-adenosylmethionine synthase from Burkholderia lata (strain ATCC 17760 / DSM 23089 / LMG 22485 / NCIMB 9086 / R18194 / 383).